The primary structure comprises 199 residues: Recombination protein RecR (199 aa).

A C4-type zinc finger spans residues 58 to 73 (CQRCFHLSSEDLCNIC). The 95-residue stretch at 81 to 175 (QTICVVADPR…RVTRIAFGLP (95 aa)) folds into the Toprim domain.

Belongs to the RecR family.

May play a role in DNA repair. It seems to be involved in an RecBC-independent recombinational process of DNA repair. It may act with RecF and RecO. In Synechococcus elongatus (strain ATCC 33912 / PCC 7942 / FACHB-805) (Anacystis nidulans R2), this protein is Recombination protein RecR.